Reading from the N-terminus, the 75-residue chain is Cytoplasmic envelopment protein 3 (75 aa).

The N-myristoyl glycine; by host moiety is linked to residue Gly-2. The span at 53-65 (EGLEYDEDSENDE) shows a compositional bias: acidic residues. The disordered stretch occupies residues 53–75 (EGLEYDEDSENDELLFLPNKKPN).

The protein belongs to the herpesviridae cytoplasmic envelopment protein 3 family. As to quaternary structure, interacts with BGLF2; this interaction is essential for the proper localization of each protein to the assembly complex and thus for the production of infectious virus. Post-translationally, myristoylation and palmitoylation (probably on one or more of the nearby cysteines at the N-terminus) enable membrane-binding and Golgi apparatus-specific targeting and are essential for efficient packaging. In terms of processing, phosphorylated. Phosphorylation does not seem to be required for recycling to the host Golgi apparatus. Packaging is selective for underphosphorylated forms.

The protein localises to the virion tegument. It localises to the virion membrane. The protein resides in the host cell membrane. Its subcellular location is the host Golgi apparatus membrane. Its function is as follows. Plays an important role in the cytoplasmic envelopment of tegument proteins and capsids during the assembly and egress processes. Also participates in viral entry at the fusion step probably by regulating the core fusion machinery. The chain is Cytoplasmic envelopment protein 3 from Homo sapiens (Human).